The sequence spans 445 residues: Phosphoglucosamine mutase (445 aa).

Ser-102 functions as the Phosphoserine intermediate in the catalytic mechanism. The Mg(2+) site is built by Ser-102, Asp-241, Asp-243, and Asp-245. Ser-102 is subject to Phosphoserine.

The protein belongs to the phosphohexose mutase family. The cofactor is Mg(2+). In terms of processing, activated by phosphorylation.

It carries out the reaction alpha-D-glucosamine 1-phosphate = D-glucosamine 6-phosphate. Its function is as follows. Catalyzes the conversion of glucosamine-6-phosphate to glucosamine-1-phosphate. This is Phosphoglucosamine mutase from Salmonella dublin (strain CT_02021853).